Consider the following 189-residue polypeptide: Small ribosomal subunit protein uS5 (189 aa).

Positions 22–85 constitute an S5 DRBM domain; that stretch reads FVDKLVAINR…EAAKRELIFV (64 aa).

It belongs to the universal ribosomal protein uS5 family. As to quaternary structure, part of the 30S ribosomal subunit. Contacts proteins S4 and S8.

In terms of biological role, with S4 and S12 plays an important role in translational accuracy. Its function is as follows. Located at the back of the 30S subunit body where it stabilizes the conformation of the head with respect to the body. This is Small ribosomal subunit protein uS5 from Rhizobium etli (strain CIAT 652).